We begin with the raw amino-acid sequence, 158 residues long: Transcription elongation factor GreA (158 aa).

The protein belongs to the GreA/GreB family.

Functionally, necessary for efficient RNA polymerase transcription elongation past template-encoded arresting sites. The arresting sites in DNA have the property of trapping a certain fraction of elongating RNA polymerases that pass through, resulting in locked ternary complexes. Cleavage of the nascent transcript by cleavage factors such as GreA or GreB allows the resumption of elongation from the new 3'terminus. GreA releases sequences of 2 to 3 nucleotides. The protein is Transcription elongation factor GreA of Acinetobacter baumannii (strain SDF).